We begin with the raw amino-acid sequence, 205 residues long: Cryptic plasmid protein C (205 aa).

The disordered stretch occupies residues Thr142–Phe205. Positions Gln155–Ile174 are enriched in polar residues. Basic residues predominate over residues Gln189–Phe205.

The protein is Cryptic plasmid protein C (cppC) of Neisseria gonorrhoeae.